Reading from the N-terminus, the 151-residue chain is Arginine repressor (151 aa).

It belongs to the ArgR family.

The protein resides in the cytoplasm. Its pathway is amino-acid biosynthesis; L-arginine biosynthesis [regulation]. Functionally, regulates arginine biosynthesis genes. This Enterococcus faecalis (strain ATCC 700802 / V583) protein is Arginine repressor.